The primary structure comprises 196 residues: Guanylate kinase (196 aa).

The Guanylate kinase-like domain maps to 8–191 (GRLIVLTGPT…AAADLWSVIA (184 aa)). 15–22 (GPTAVGKG) is an ATP binding site.

This sequence belongs to the guanylate kinase family.

Its subcellular location is the cytoplasm. It carries out the reaction GMP + ATP = GDP + ADP. Its function is as follows. Essential for recycling GMP and indirectly, cGMP. The polypeptide is Guanylate kinase (Bifidobacterium longum (strain NCC 2705)).